Consider the following 184-residue polypeptide: MKLIAGLGNPGKKYERTRHNVGFMVVDELSFRHQTPWKKSKFNGMVSEINVGGEKMILVKPLTFMNASGECIRPLMDYYNIQIEDVLIVYDDLDLPVGKIRLRQKGSAGGHNGMKSIIQHVKTQEFNRIRVGVSRPLKGEVIHYVLGDFPKAEQPDIIAAIQKSADAIEDFAQTPFIEVMNKYN.

TRNA is bound at residue Y14. The active-site Proton acceptor is H19. The tRNA site is built by F64, N66, and N112.

Belongs to the PTH family. Monomer.

It localises to the cytoplasm. The enzyme catalyses an N-acyl-L-alpha-aminoacyl-tRNA + H2O = an N-acyl-L-amino acid + a tRNA + H(+). Its function is as follows. Hydrolyzes ribosome-free peptidyl-tRNAs (with 1 or more amino acids incorporated), which drop off the ribosome during protein synthesis, or as a result of ribosome stalling. In terms of biological role, catalyzes the release of premature peptidyl moieties from peptidyl-tRNA molecules trapped in stalled 50S ribosomal subunits, and thus maintains levels of free tRNAs and 50S ribosomes. The chain is Peptidyl-tRNA hydrolase from Listeria innocua serovar 6a (strain ATCC BAA-680 / CLIP 11262).